Consider the following 315-residue polypeptide: MTKRFKLKISRILSFKSCRLKDPSSLPFNPVSSSLRRTSPLVNSSADVTTVPQRRRSSFRLHVLTVFGCGRSSTPLDVDLRNSPVLSPPQTPTFQWESEGKWHVIAQVTEEEYETPRRKIYNGGSEKDNRRRLKKKEKSNSRRRGSISSAEEETDRESLLPSSTNLSPEYSSSELPRVTRRPRQLLKKAVIEEESESSSPPPSPARLSSFVQRLMPCTMAAAVMVEGVAVVKKSEDPYEDFKGSMMEMIVEKKMFEVAELEQLLSCFLSLNAKRHHRAIVRAFSEIWVALFSGGSGGGRRSSSFSSVRLSDYDEC.

Residues 113–183 are disordered; sequence YETPRRKIYN…ELPRVTRRPR (71 aa). The segment covering 130-145 has biased composition (basic residues); the sequence is RRRLKKKEKSNSRRRG. Positions 160–174 are enriched in polar residues; that stretch reads LPSSTNLSPEYSSSE. The 60-residue stretch at 230 to 289 folds into the OVATE domain; sequence VVKKSEDPYEDFKGSMMEMIVEKKMFEVAELEQLLSCFLSLNAKRHHRAIVRAFSEIWVA.

As to expression, expressed in roots, shoots, stems, flower buds and siliques.

It localises to the nucleus. Transcriptional repressor that regulates multiple aspects of plant growth and development through the regulation of BEL1-LIKE (BLH) and KNOX TALE (KNAT) homeodomain transcription factors. This Arabidopsis thaliana (Mouse-ear cress) protein is Transcription repressor OFP7 (OFP7).